A 148-amino-acid polypeptide reads, in one-letter code: Probable calcium-binding protein CML14 (148 aa).

EF-hand domains are found at residues D9 to N44, P80 to K115, and L116 to K148. Ca(2+) is bound by residues D22, D24, D26, K28, and E33.

Potential calcium sensor. In Arabidopsis thaliana (Mouse-ear cress), this protein is Probable calcium-binding protein CML14 (CML14).